Reading from the N-terminus, the 119-residue chain is Transcription and mRNA export factor SUS1 (119 aa).

It belongs to the ENY2 family. As to quaternary structure, component of the nuclear pore complex (NPC)-associated TREX-2 complex (transcription and export complex 2), composed of at least SUS1, SAC3, THP1, SEM1, and CDC31. TREX-2 contains 2 SUS1 chains. The TREX-2 complex interacts with the nucleoporin NUP1. Component of the 1.8 MDa SAGA transcription coactivator-HAT complex. SAGA is built of 5 distinct domains with specialized functions. Within the SAGA complex, SUS1, SGF11, SGF73 and UBP8 form an additional subcomplex of SAGA called the DUB module (deubiquitination module). Interacts directly with THP1, SAC3, SGF11, and with the RNA polymerase II.

It localises to the nucleus. Its subcellular location is the nucleoplasm. The protein resides in the cytoplasm. It is found in the P-body. Involved in mRNA export coupled transcription activation by association with both the TREX-2 and the SAGA complexes. At the promoters, SAGA is required for recruitment of the basal transcription machinery. It influences RNA polymerase II transcriptional activity through different activities such as TBP interaction and promoter selectivity, interaction with transcription activators, and chromatin modification through histone acetylation and deubiquitination. Within the SAGA complex, participates in a subcomplex required for deubiquitination of H2B and for the maintenance of steady-state H3 methylation levels. The TREX-2 complex functions in docking export-competent ribonucleoprotein particles (mRNPs) to the nuclear entrance of the nuclear pore complex (nuclear basket). TREX-2 participates in mRNA export and accurate chromatin positioning in the nucleus by tethering genes to the nuclear periphery. May also be involved in cytoplasmic mRNA decay by interaction with components of P-bodies. This is Transcription and mRNA export factor SUS1 from Candida albicans (strain SC5314 / ATCC MYA-2876) (Yeast).